We begin with the raw amino-acid sequence, 313 residues long: MKWIEIKIKTTEEACDAISYMLTSIGAGGVAIEDPNEIRRETQKSNSIDYVDDEFLNSLGEDVVVKAYFPGETNVPELVSLIKEKLAFIGTFLNVGEGYCGYAEMDEEDWSNSWKKYYKPLHLTDRLIVKPSWENYDNKDGEIIIEMNPGMAFGTGTHETTKMCAVLLDKYVKDGCRVIDVGCGTGILSIIASKLGAAEVTAVDIDEVAVKVAKENLELNKVDNVRVFKGVLDDIEKEKRDIVVANIIANVIMDISSRVPYYLKKDGLFIASGIIKERKQEVLDECLRKGFECVEIIEMGEWVAIVLRCLDSL.

Positions 161, 182, 204, and 246 each coordinate S-adenosyl-L-methionine.

Belongs to the methyltransferase superfamily. PrmA family.

It localises to the cytoplasm. It catalyses the reaction L-lysyl-[protein] + 3 S-adenosyl-L-methionine = N(6),N(6),N(6)-trimethyl-L-lysyl-[protein] + 3 S-adenosyl-L-homocysteine + 3 H(+). Functionally, methylates ribosomal protein L11. The polypeptide is Ribosomal protein L11 methyltransferase (Acetivibrio thermocellus (strain ATCC 27405 / DSM 1237 / JCM 9322 / NBRC 103400 / NCIMB 10682 / NRRL B-4536 / VPI 7372) (Clostridium thermocellum)).